The chain runs to 426 residues: MSRSKRDSNFSVFEIGDSTFTVLKRYQNLKPIGSGAQGIVCAAFDAVLERHVAIKKLSRPFQNQTHAKRAYRELVLMKCVNHKNIIGLLNVFTPQKSLEEFQDLYIVMELMDANLCQVIQMELDHERMSYLLYQMLCGIKHLHSAGIIHRDLKPSNIVVKSDCTLKILDFGLARTAGTSFMMTPYVVTRYYRAPEVILGMGYKENVDIWSVGCILGEMIKGGVLFPGTDHIDQWNKVIEQLGTPCTEFMKKLQPTVRTYVENRPKYAGYSFEKLFPDVLFPADSEHNKLKASQARDLLSKMLVIDASKRISVDDALQHPYINVWYDPLEAEAPPPKIPDKQLDEREHTIEEWKELIYKEVLDWEERAKNGVIRGQPAPLGAAVTDGSQAHTSSSSGDASSMSTDPTLPSDTDSSLETSAGTLGCCR.

The 296-residue stretch at 26-321 (YQNLKPIGSG…VDDALQHPYI (296 aa)) folds into the Protein kinase domain. ATP-binding positions include 33 to 38 (GSGAQG) and Lys-55. Asp-151 acts as the Proton acceptor in catalysis. Thr-183 is modified (phosphothreonine). Residues 183 to 185 (TPY) carry the TXY motif. Residue Tyr-185 is modified to Phosphotyrosine. The segment at 375–426 (QPAPLGAAVTDGSQAHTSSSSGDASSMSTDPTLPSDTDSSLETSAGTLGCCR) is disordered. Over residues 384 to 404 (TDGSQAHTSSSSGDASSMSTD) the composition is skewed to low complexity. Residues 405-420 (PTLPSDTDSSLETSAG) show a composition bias toward polar residues.

Belongs to the protein kinase superfamily. CMGC Ser/Thr protein kinase family. MAP kinase subfamily. Mg(2+) is required as a cofactor. Post-translationally, dually phosphorylated on Thr-183 and Tyr-185, which activates the enzyme. In terms of tissue distribution, strongly expressed in presumptive ectoderm and mesoderm regions and weakly expressed in endoderm regions during early stages of embryo development. Expressed in the head and dorsal regions during neurula and tailbud stages.

It localises to the cytoplasm. It is found in the nucleus. The protein localises to the synapse. The catalysed reaction is L-seryl-[protein] + ATP = O-phospho-L-seryl-[protein] + ADP + H(+). It catalyses the reaction L-threonyl-[protein] + ATP = O-phospho-L-threonyl-[protein] + ADP + H(+). With respect to regulation, activated by threonine and tyrosine phosphorylation, potentially by the dual-specificity kinase, MKK7. Indirectly activated by Wnt5a. Responds to activation by environmental stress and pro-inflammatory cytokines by phosphorylating a number of transcription factors, and thus regulating transcriptional activity. Regulates morphogenic cell movements, controlling convergent extension during gastrulation. May play a role in the regulation of the circadian clock. The chain is Mitogen-activated protein kinase 8 (mapk8) from Xenopus laevis (African clawed frog).